Here is a 569-residue protein sequence, read N- to C-terminus: Paxillin-B (569 aa).

The LD motif 1 motif lies at 10–18; the sequence is DLDLLLADL. The segment covering 62–78 has biased composition (polar residues); the sequence is QPQTVQTISTPAPKNHN. The interval 62–103 is disordered; the sequence is QPQTVQTISTPAPKNHNTTTTTASFSVSSQPAPQPPQQSQQI. The span at 79–102 shows a compositional bias: low complexity; that stretch reads TTTTTASFSVSSQPAPQPPQQSQQ. The LD motif 2 motif lies at 106-112; sequence LDDLDEL. A disordered region spans residues 129–311; it reads TTPEEHITHA…SPKVVHGDDL (183 aa). Positions 150 to 161 are enriched in low complexity; the sequence is NTSSTNSASSLS. Polar residues-rich tracts occupy residues 162-188 and 196-206; these read RPNNNPSVVSTPQPGKVTSTATITTKK and TLETTSGNNVY. The segment covering 207–217 has biased composition (low complexity); the sequence is SSQPSQSQPQP. The LD motif 3 signature appears at 232 to 239; it reads LDELLKGL. A compositionally biased stretch (basic residues) spans 258-272; sequence HQHHHQHQHHHHHNP. A compositionally biased stretch (low complexity) spans 273 to 301; sequence NHNQTQTVTTQINIGRTNTPNNNNNNNTN. The LD motif 4 motif lies at 311–318; that stretch reads LDNLLNNL. LIM zinc-binding domains lie at 334-391, 393-452, 453-510, and 511-569; these read GTCG…QELF, ARCA…TFAV, RCGG…QQAG, and SVCS…KLFA.

Belongs to the paxillin family. Expressed in the upper and lower cup of the fruiting body.

The protein localises to the cytoplasm. It localises to the cell cortex. Its subcellular location is the cell projection. It is found in the filopodium. The protein resides in the cell junction. The protein localises to the focal adhesion. It localises to the cytoskeleton. Its function is as follows. Required for cell-substrate adhesion, cell sorting, slug migration, and cell differentiation. May function upstream of limB. The polypeptide is Paxillin-B (paxB) (Dictyostelium discoideum (Social amoeba)).